We begin with the raw amino-acid sequence, 393 residues long: Dual specificity mitogen-activated protein kinase kinase 1 (393 aa).

A disordered region spans residues 1–27 (MPKKKPTPIQLNPAPDGSAVNGTSSAE). The 294-residue stretch at 68 to 361 (FEKISELGAG…LKQLMVHAFI (294 aa)) folds into the Protein kinase domain. ATP is bound by residues 74-82 (LGAGNGGVV) and lysine 97. Residue aspartate 190 is the Proton acceptor of the active site. Phosphoserine; by RAF is present on residues serine 218 and serine 222. The interval 270–307 (ELELLFGCQVEGDAAETPPRPRTPGRPLSSYGMDSRPP) is RAF1-binding. Residue threonine 286 is modified to Phosphothreonine. Threonine 292 is subject to Phosphothreonine; by MAPK1. Position 298 is a phosphoserine; by PAK (serine 298).

Belongs to the protein kinase superfamily. STE Ser/Thr protein kinase family. MAP kinase kinase subfamily. As to quaternary structure, found in a complex with at least BRAF, HRAS, MAP2K1, MAPK3/ERK1 and RGS14. Forms a heterodimer with MAP2K2/MEK2. Forms heterodimers with KSR2 which further dimerize to form tetramers. Interacts with KSR1 or KSR2 and BRAF; the interaction with KSR1 or KSR2 mediates KSR1-BRAF or KSR2-BRAF dimerization. Interacts with ARBB2, LAMTOR3, MAPK1/ERK2 and RAF1. Interacts with MAPK1/ERK2. Interacts with MORG1. Interacts with PPARG. Interacts with VRK2. Interacts with SGK1. Interacts with BIRC6/bruce. Interacts with KAT7; the interaction promotes KAT7 phosphorylation. Interacts with RAF1 and NEK10; the interaction is required for ERK1/2-signaling pathway activation in response to UV irradiation. Interacts with TRAF3IP3. Interacts with MOS. Post-translationally, phosphorylation at Ser-218 and Ser-222 by MAP kinase kinase kinases (BRAF or MEKK1) positively regulates kinase activity. Also phosphorylated at Thr-292 by MAPK1/ERK2 and at Ser-298 by PAK. MAPK1/ERK2 phosphorylation of Thr-292 occurs in response to cellular adhesion and leads to inhibition of Ser-298 phosphorylation by PAK. Autophosphorylated at Ser-218 and Ser-222, autophosphosphorylation is promoted by NEK10 following UV irradiation.

It is found in the cytoplasm. It localises to the cytoskeleton. The protein resides in the microtubule organizing center. The protein localises to the centrosome. Its subcellular location is the spindle pole body. It is found in the nucleus. It localises to the membrane. It catalyses the reaction L-seryl-[protein] + ATP = O-phospho-L-seryl-[protein] + ADP + H(+). The catalysed reaction is L-threonyl-[protein] + ATP = O-phospho-L-threonyl-[protein] + ADP + H(+). It carries out the reaction L-tyrosyl-[protein] + ATP = O-phospho-L-tyrosyl-[protein] + ADP + H(+). Ras proteins such as HRAS mediate the activation of RAF proteins such as RAF1 or BRAF which in turn activate extracellular signal-regulated kinases (ERK) through MAPK (mitogen-activated protein kinases) and ERK kinases MAP2K1/MEK1 and MAP2K2/MEK2. Activation occurs through phosphorylation of Ser-218 and Ser-222. MAP2K1/MEK1 binds KSR1 or KSR2 releasing the inhibitory intramolecular interaction between KSR1 or KSR2 protein kinase and N-terminal domains. This allows KSR1 or KSR2 dimerization with BRAF leading to BRAF activation and phosphorylation of MAP2K1. MAP2K1/MEK1 is also the target of negative feed-back regulation by its substrate kinases, such as MAPK1/ERK2. These phosphorylate MAP2K1/MEK1 on Thr-292, thereby facilitating dephosphorylation of the activating residues Ser-218 and Ser-222. Inhibited by serine/threonine phosphatase 2A. Its function is as follows. Dual specificity protein kinase which acts as an essential component of the MAP kinase signal transduction pathway. Binding of extracellular ligands such as growth factors, cytokines and hormones to their cell-surface receptors activates RAS and this initiates RAF1 activation. RAF1 then further activates the dual-specificity protein kinases MAP2K1/MEK1 and MAP2K2/MEK2. Both MAP2K1/MEK1 and MAP2K2/MEK2 function specifically in the MAPK/ERK cascade, and catalyze the concomitant phosphorylation of a threonine and a tyrosine residue in a Thr-Glu-Tyr sequence located in the extracellular signal-regulated kinases MAPK3/ERK1 and MAPK1/ERK2, leading to their activation and further transduction of the signal within the MAPK/ERK cascade. Activates BRAF in a KSR1 or KSR2-dependent manner; by binding to KSR1 or KSR2 releases the inhibitory intramolecular interaction between KSR1 or KSR2 protein kinase and N-terminal domains which promotes KSR1 or KSR2-BRAF dimerization and BRAF activation. Depending on the cellular context, this pathway mediates diverse biological functions such as cell growth, adhesion, survival and differentiation, predominantly through the regulation of transcription, metabolism and cytoskeletal rearrangements. One target of the MAPK/ERK cascade is peroxisome proliferator-activated receptor gamma (PPARG), a nuclear receptor that promotes differentiation and apoptosis. MAP2K1/MEK1 has been shown to export PPARG from the nucleus. The MAPK/ERK cascade is also involved in the regulation of endosomal dynamics, including lysosome processing and endosome cycling through the perinuclear recycling compartment (PNRC), as well as in the fragmentation of the Golgi apparatus during mitosis. This chain is Dual specificity mitogen-activated protein kinase kinase 1, found in Rattus norvegicus (Rat).